A 591-amino-acid chain; its full sequence is V-type ATP synthase alpha chain (591 aa).

ATP is bound at residue 233 to 240 (GPFGAGKT).

It belongs to the ATPase alpha/beta chains family.

It carries out the reaction ATP + H2O + 4 H(+)(in) = ADP + phosphate + 5 H(+)(out). Functionally, produces ATP from ADP in the presence of a proton gradient across the membrane. The V-type alpha chain is a catalytic subunit. This chain is V-type ATP synthase alpha chain, found in Streptococcus pyogenes serotype M12 (strain MGAS2096).